The sequence spans 130 residues: Small ribosomal subunit protein uS9 (130 aa).

The segment at 101–130 (AGLLTRDARMKERKKPGLKKARKASQFSKR) is disordered. A compositionally biased stretch (basic residues) spans 111-130 (KERKKPGLKKARKASQFSKR).

It belongs to the universal ribosomal protein uS9 family.

The sequence is that of Small ribosomal subunit protein uS9 from Levilactobacillus brevis (strain ATCC 367 / BCRC 12310 / CIP 105137 / JCM 1170 / LMG 11437 / NCIMB 947 / NCTC 947) (Lactobacillus brevis).